The primary structure comprises 242 residues: tRNA (guanine-N(1)-)-methyltransferase (242 aa).

S-adenosyl-L-methionine is bound by residues glycine 114 and 134–139 (IGDFVL). Positions 223 to 233 (RRDLLPEHSKN) are enriched in basic and acidic residues. The segment at 223-242 (RRDLLPEHSKNNPEQTNKLS) is disordered.

This sequence belongs to the RNA methyltransferase TrmD family. In terms of assembly, homodimer.

It localises to the cytoplasm. It carries out the reaction guanosine(37) in tRNA + S-adenosyl-L-methionine = N(1)-methylguanosine(37) in tRNA + S-adenosyl-L-homocysteine + H(+). Its function is as follows. Specifically methylates guanosine-37 in various tRNAs. In Rhodopirellula baltica (strain DSM 10527 / NCIMB 13988 / SH1), this protein is tRNA (guanine-N(1)-)-methyltransferase.